The sequence spans 348 residues: VIP36-like protein (348 aa).

The N-terminal stretch at methionine 1–glycine 38 is a signal peptide. The Lumenal portion of the chain corresponds to proline 39 to alanine 313. The L-type lectin-like domain occupies glutamate 49–leucine 274. Residues serine 93 and aspartate 128 each coordinate a carbohydrate. Positions 159, 161, and 163 each coordinate Ca(2+). Tyrosine 161–asparagine 163 is an a carbohydrate binding site. Asparagine 181 is a glycosylation site (N-linked (GlcNAc...) asparagine). A carbohydrate is bound at residue histidine 188. Residue aspartate 191 participates in Ca(2+) binding. Cysteine 200 and cysteine 237 are oxidised to a cystine. Position 258-260 (glycine 258–leucine 260) interacts with a carbohydrate. Residues leucine 314–isoleucine 334 traverse the membrane as a helical segment. Residues leucine 335–tyrosine 348 are Cytoplasmic-facing. The Endoplasmic reticulum retention signal signature appears at arginine 344–arginine 346.

The protein localises to the endoplasmic reticulum membrane. It is found in the golgi apparatus membrane. Its function is as follows. May be involved in the regulation of export from the endoplasmic reticulum of a subset of glycoproteins. May function as a regulator of ERGIC-53. The protein is VIP36-like protein (LMAN2L) of Pongo abelii (Sumatran orangutan).